The sequence spans 561 residues: Thymidine kinase (561 aa).

Composition is skewed to polar residues over residues 1–14 (MASNSHNNYNTPRR) and 112–122 (LSSSNTASGLR). Disordered stretches follow at residues 1-22 (MASNSHNNYNTPRRQNYDVPKA) and 34-122 (FLTQ…SGLR). 245 to 252 (GCMAAGKT) serves as a coordination point for ATP. The active-site Proton acceptor is glutamate 272. Glutamine 310 provides a ligand contact to substrate. Arginine 400 provides a ligand contact to ATP. Residue arginine 406 coordinates substrate.

Belongs to the herpesviridae thymidine kinase family. As to quaternary structure, homodimer.

It carries out the reaction thymidine + ATP = dTMP + ADP + H(+). Catalyzes the transfer of the gamma-phospho group of ATP to thymidine to generate dTMP in the salvage pathway of pyrimidine synthesis. The dTMP serves as a substrate for DNA polymerase during viral DNA replication. Allows the virus to be reactivated and to grow in non-proliferative cells lacking a high concentration of phosphorylated nucleic acid precursors. This chain is Thymidine kinase, found in Connochaetes taurinus (Blue wildebeest).